The following is a 342-amino-acid chain: Ankyrin repeat domain-containing protein 2A (342 aa).

The segment at 1–41 is disordered; it reads MASNSEKNPLLSDEKPKSTEENKSSKPESASGSSTSSAMPG. Over residues 12–26 the composition is skewed to basic and acidic residues; sequence SDEKPKSTEENKSSK. Positions 27–37 are enriched in low complexity; sequence PESASGSSTSS. ANK repeat units lie at residues 217 to 246, 250 to 279, 283 to 312, and 316 to 342; these read EEESIVHQTASLGDVEGLKAALASGGNKDE, EGRTALHFACGYGELKCAQVLIDAGASVNA, NKNTPLHYAAGYGRKECVSLLLENGAAVTL, and DEKTPIDVAKLNSQLEVVKLLEKDAFL. Residues H223 and E246 each contribute to the a 1,2-diacyl-3-O-(beta-D-galactosyl)-sn-glycerol site. A 1,2-diacyl-sn-glycero-3-phospho-(1'-sn-glycerol) contacts are provided by Y294 and R296.

In terms of assembly, interacts with TOM20-4, CYTB5-E, CBR1, APX3, APX5, TOC34 and GRF6. Binds to chloroplast outer envelope membrane (OEM) protein targeting signals, as well as to chloroplasts. Interacts with OEP7. Binds to HSP17.8 via its ankyrin repeats, this interaction enhances chaperone activity and chloroplast binding. Also interacts with HSP17.4A, HSP17.6A and HSP18.1. Binds specifically to two chloroplast glycolipids, monogalactosyldiacylglycerol (MGDG) and phosphatidylglycerol (PG). In terms of tissue distribution, ubiquitously expressed at basal level.

Its subcellular location is the cytoplasm. The protein resides in the nucleus. It localises to the plastid. The protein localises to the chloroplast outer membrane. In terms of biological role, exhibits chaperone activity toward chloroplast outer envelope membrane, mitochondrion outer membrane, endoplasmic reticulum membrane and peroxisomal proteins, by recruiting specific proteins containing a single transmembrane associated with an AKR2A-binding sequence (ABS) and subsequently binding glycolipids (e.g. monogalactosyldiacylglycerol (MGDG) and phosphatidylglycerol (PG)) present in the membrane of the target organelle. Seems to be involved in the regulation of hydrogen peroxide levels during biotic and abiotic stresses by optimizing the ascorbate peroxidase 3 (APX3) hydrogen peroxide-degrading activity. This regulation might be monitored by GRF6. Cytosolic targeting factor for chloroplast outer membrane (COM) proteins that mediates sorting and targeting of nascent chloroplast outer envelope membrane (OEM) proteins to the chloroplast. Facilitates the targeting of OEP7 to chloroplasts. Facilitates the targeting of APX3 to peroxisomes. Involved in cellular metabolism (e.g. peroxisome activity) and required for plant growth and development. In Arabidopsis thaliana (Mouse-ear cress), this protein is Ankyrin repeat domain-containing protein 2A.